Reading from the N-terminus, the 933-residue chain is SGGFDFGVGLGPGPMGLMGPRGPPGASGAPGPQGFQGPAGEPGEPGQTGPAGARPGKAGEDGHPGKPGRPGERGVVGPQGARGFPGTPGLPGFKGIGARGLPGERGRVGAPGPAGARGSDGSVGPVGPAGPIGSAGPPGFPGAPGPKGELGPVGNPGPAGPAGPRGEQGLPGVSGPVGPPGNPGANGLTGAKGAAGLPGVAGAPGLPGPRGIPGPVGAVGATGARGLVGEPGPAGSKGESGNKGEPGSAGPQGPPGPSGEEGKRGPNGESGSTGPTGPPGLRGGPGSRGLPGADGRAGVMGPAGRGASGPAGVRGRPGEPGLMGPRGLPGSPGNTGPAGKEGPVGLPGIDGRPGPVGPAGRGEAGNIGFPGPKGPTGDPGKAGEKGHAGLAGNRGAPGPDGNNGAQGPPGLQGVQGGKGEQGPAGPPGFQGLPGPGTTGEAGKPGERGIHGEFGLPGPAGPRGERGPPGESGAAGPVGPIGSRGPSGPPGPDGNKGEPGVVGAPGTAGPAGSGGLPGERGAAGIPGGKGEKGETGLRGEVGTTGRDGARGAPGAVGAPGPAGATGDRGEAGAAGPAGPAGPRGSPGERGEVGPAGPNGFAGPAGAAGQPGAKGERKGPKGENGIVGPTGPVGAAGPSGPNGAPGPAGGRGDGGPPGLTGFPGAAGRTGPPGPSGITGPPGPPGAAGKEGLRGPRGDQGPVGRTGETGAGGPPGFAGEKGPSGEPGTAGPPGTAGPQGLLGAPGILGLPGSRGERGLPGVAGAVGEPGPLGISGPPGARGPSGAVGPGVNGAPGEAGRDGLPGHKGERGYAGNAGPVGAAGAPGPHGSVGPAGKHGNRGEPGPAGSVGPVGAVGPRGPSGPQGVRGDKGEGDKGPRGLPGGLQGLPGLAGQHGDQGSPGPVGPAGPRGPAGPSGPAGKDGRTGHPGAVGPAGVR.

Residues Ser-1–Gly-16 are compositionally biased toward gly residues. 2 disordered regions span residues Ser-1–Ala-191 and Leu-206–Arg-933. Residues Leu-17–Ala-53 are compositionally biased toward low complexity. Residues Pro-24 and Pro-30 each carry the 4-hydroxyproline modification. A compositionally biased stretch (basic and acidic residues) spans Lys-57–Glu-72. The residue at position 94 (Lys-94) is a 5-hydroxylysine; alternate. The O-linked (Gal...) hydroxylysine; alternate glycan is linked to Lys-94. Composition is skewed to low complexity over residues Val-108 to Pro-137, Ala-162 to Pro-176, and Pro-213 to Val-228. Positions Gly-280–Gly-289 are enriched in gly residues. 2 positions are modified to 4-hydroxyproline: Pro-317 and Pro-320. Residues Gly-413–Gly-422 are compositionally biased toward gly residues. Low complexity-rich tracts occupy residues Pro-468–Pro-485 and Glu-497–Ala-507. Positions Gly-508 to Gly-517 are enriched in gly residues. Composition is skewed to low complexity over residues Val-540 to Ser-584, Val-591 to Ala-611, and Pro-627 to Asn-640. The span at Gly-644–Gly-656 shows a compositional bias: gly residues. Positions Leu-657–Thr-667 are enriched in low complexity. A compositionally biased stretch (gly residues) spans Gly-704–Gly-713. Composition is skewed to low complexity over residues Ser-721–Pro-748 and Leu-756–Ser-781. A compositionally biased stretch (basic and acidic residues) spans Ala-795–Arg-807. Composition is skewed to low complexity over residues Tyr-809 to Ala-831 and Pro-840 to Pro-860. Basic and acidic residues predominate over residues Arg-864–Pro-874.

It belongs to the fibrillar collagen family. Trimers of one alpha 2(I) and two alpha 1(I) chains. Interacts (via C-terminus) with TMEM131 (via PapD-L domain); the interaction is direct and is involved in assembly and TRAPPIII ER-to-Golgi transport complex-dependent secretion of collagen. In terms of processing, prolines at the third position of the tripeptide repeating unit (G-X-Y) are hydroxylated in some or all of the chains. In terms of tissue distribution, expressed in bones.

It is found in the secreted. It localises to the extracellular space. The protein localises to the extracellular matrix. Functionally, type I collagen is a member of group I collagen (fibrillar forming collagen). The chain is Collagen alpha-2(I) chain from Glyptodon sp. (strain SLP-2019) (Giant armadillo).